Reading from the N-terminus, the 189-residue chain is GTPase KRas (189 aa).

Met-1 is modified (N-acetylmethionine). Thr-2 carries the N-acetylthreonine; in GTPase KRas, N-terminally processed modification. Residues 10-18, 29-35, and 59-60 contribute to the GTP site; these read GAGGVGKSA, VDEYDPT, and AG. The Effector region motif lies at 32 to 40; it reads YDPTIEDSY. An N6-acetyllysine modification is found at Lys-104. 116–119 is a GTP binding site; it reads NKCD. The segment at 166–185 is hypervariable region; sequence YRLKKISKEEKTPGCVKIKK. Lys-170 is covalently cross-linked (Glycyl lysine isopeptide (Lys-Gly) (interchain with G-Cter in ubiquitin)). The S-palmitoyl cysteine moiety is linked to residue Cys-180. N6-palmitoyl lysine attachment occurs at residues Lys-182, Lys-184, and Lys-185. Cysteine methyl ester is present on Cys-186. A lipid anchor (S-farnesyl cysteine) is attached at Cys-186. Residues 187–189 constitute a propeptide, removed in mature form; it reads VIM.

This sequence belongs to the small GTPase superfamily. Ras family. In terms of assembly, interacts with PHLPP. Interacts (active GTP-bound form preferentially) with RGS14. Interacts (when farnesylated) with PDE6D; this promotes dissociation from the cell membrane. Interacts with SOS1. Interacts (when farnesylated) with GPR31. Interacts with RAP1GDS1. Interacts (active GTP-bound form) with both SHOC2 and PP1c (all isoforms) to form a tertiary complex; SHOC2 and PP1c preferably bind M-Ras/MRAS, but they also bind K-Ras/KRAS, N-Ras/NRAS and H-Ras/HRAS. Interacts (GTP-bound form) with MAPKAP1/SIN1; inhibiting K-Ras/KRAS activity. As to quaternary structure, interacts (when farnesylated) with GPR31. Acetylation at Lys-104 prevents interaction with guanine nucleotide exchange factors (GEFs). In terms of processing, ubiquitinated by the BCR(LZTR1) E3 ubiquitin ligase complex at Lys-170 in a non-degradative manner, leading to inhibit Ras signaling by decreasing Ras association with membranes. Post-translationally, palmitoylated at Lys-182, Lys-184 and Lys-185. Lysine-depalmitoylation by SIRT2 promotes its localization to endomembranes in endocytic pathways.

The protein localises to the cell membrane. It localises to the endomembrane system. Its subcellular location is the cytoplasm. The protein resides in the cytosol. The catalysed reaction is GTP + H2O = GDP + phosphate + H(+). Its activity is regulated as follows. Alternates between an inactive form bound to GDP and an active form bound to GTP. Activated by a guanine nucleotide-exchange factor (GEF) and inactivated by a GTPase-activating protein (GAP). Interaction with SOS1 promotes exchange of bound GDP to GTP. Ras proteins bind GDP/GTP and possess intrinsic GTPase activity. Plays an important role in the regulation of cell proliferation. Plays a role in promoting oncogenic events by inducing transcriptional silencing of tumor suppressor genes (TSGs) in colorectal cancer (CRC) cells in a ZNF304-dependent manner. The sequence is that of GTPase KRas (Kras) from Rattus norvegicus (Rat).